The primary structure comprises 1072 residues: Carbamoyl phosphate synthase large chain (1072 aa).

Positions Met1 to Glu401 are carboxyphosphate synthetic domain. Arg129, Arg169, Gly175, Gly176, Lys208, Leu210, Glu215, Gly241, Val242, His243, Gln284, and Glu298 together coordinate ATP. The ATP-grasp 1 domain maps to Lys133–Ile327. Mg(2+) contacts are provided by Gln284, Glu298, and Asn300. Gln284, Glu298, and Asn300 together coordinate Mn(2+). The segment at Ile402–Asp544 is oligomerization domain. Residues Glu545–Gly929 form a carbamoyl phosphate synthetic domain region. Positions Ser671–Leu861 constitute an ATP-grasp 2 domain. ATP-binding residues include Arg707, Lys746, Ile748, Glu752, Gly777, Val778, His779, Ser780, Gln820, and Glu832. 3 residues coordinate Mg(2+): Gln820, Glu832, and Asn834. Positions 820, 832, and 834 each coordinate Mn(2+). Residues Leu930–Leu1072 enclose the MGS-like domain. An allosteric domain region spans residues Leu930–Leu1072.

The protein belongs to the CarB family. Composed of two chains; the small (or glutamine) chain promotes the hydrolysis of glutamine to ammonia, which is used by the large (or ammonia) chain to synthesize carbamoyl phosphate. Tetramer of heterodimers (alpha,beta)4. The cofactor is Mg(2+). Mn(2+) is required as a cofactor.

The enzyme catalyses hydrogencarbonate + L-glutamine + 2 ATP + H2O = carbamoyl phosphate + L-glutamate + 2 ADP + phosphate + 2 H(+). It carries out the reaction hydrogencarbonate + NH4(+) + 2 ATP = carbamoyl phosphate + 2 ADP + phosphate + 2 H(+). Its pathway is amino-acid biosynthesis; L-arginine biosynthesis; carbamoyl phosphate from bicarbonate: step 1/1. It functions in the pathway pyrimidine metabolism; UMP biosynthesis via de novo pathway; (S)-dihydroorotate from bicarbonate: step 1/3. In terms of biological role, large subunit of the glutamine-dependent carbamoyl phosphate synthetase (CPSase). CPSase catalyzes the formation of carbamoyl phosphate from the ammonia moiety of glutamine, carbonate, and phosphate donated by ATP, constituting the first step of 2 biosynthetic pathways, one leading to arginine and/or urea and the other to pyrimidine nucleotides. The large subunit (synthetase) binds the substrates ammonia (free or transferred from glutamine from the small subunit), hydrogencarbonate and ATP and carries out an ATP-coupled ligase reaction, activating hydrogencarbonate by forming carboxy phosphate which reacts with ammonia to form carbamoyl phosphate. The sequence is that of Carbamoyl phosphate synthase large chain from Thermoanaerobacter sp. (strain X514).